We begin with the raw amino-acid sequence, 412 residues long: MATTTTSWEELLGSKNWDTILDPLDQSLRELILRCGDFCQATYDAFVNDQNSKYCGASRYGKSSFFDKVMLENASDYEVVNFLYATARVSLPEGLLLQSQSRDSWDRESNWFGYIAVTSDERSKALGRREIYIALRGTSRNYEWVNVLGARPTSADPLLHGPEQDGSGGVVEGTTFDSDSEDEEGCKVMLGWLTIYTSNHPESKFTKLSLRSQLLAKIKELLLKYKDEKPSIVLTGHSLGATEAVLAAYDIAENGSSDDVPVTAIVFGCPQVGNKEFRDEVMSHKNLKILHVRNTIDLLTRYPGGLLGYVDIGINFVIDTKKSPFLSDSRNPGDWHNLQAMLHVVAGWNGKKGEFKLMVKRSIALVNKSCEFLKAECLVPGSWWVEKNKGLIKNEDGEWVLAPVEEEPVPEF.

At A2 the chain carries N-acetylalanine. The active-site Acyl-ester intermediate is the S238. Residues S238, D297, and H336 each act as charge relay system in the active site.

It belongs to the AB hydrolase superfamily. Lipase family. As to expression, expressed in leaves, stems, flowers and siliques, and, at low levels, in seeds and roots (at protein level).

It localises to the cytoplasm. Functionally, acylhydrolase that catalyzes the hydrolysis of phosphatidylcholine (PC) at the sn-1 position. High activity toward PC, medium activity toward monogalactosyldiacylglycerol (MGDG) and low activity toward triacylglycerol (TAG). Confers sensitivity to UV-B radiation probably by deesterifying membrane phospholipids. This chain is Phospholipase A1-IIdelta, found in Arabidopsis thaliana (Mouse-ear cress).